Reading from the N-terminus, the 167-residue chain is Ribosome maturation factor RimM (167 aa).

A PRC barrel domain is found at 94–165 (EHEYYYSDII…TIKITPMEGL (72 aa)).

It belongs to the RimM family. In terms of assembly, binds ribosomal protein uS19.

The protein resides in the cytoplasm. An accessory protein needed during the final step in the assembly of 30S ribosomal subunit, possibly for assembly of the head region. Essential for efficient processing of 16S rRNA. May be needed both before and after RbfA during the maturation of 16S rRNA. It has affinity for free ribosomal 30S subunits but not for 70S ribosomes. The protein is Ribosome maturation factor RimM of Staphylococcus epidermidis (strain ATCC 35984 / DSM 28319 / BCRC 17069 / CCUG 31568 / BM 3577 / RP62A).